A 182-amino-acid chain; its full sequence is Large ribosomal subunit protein uL6 (182 aa).

This sequence belongs to the universal ribosomal protein uL6 family. As to quaternary structure, part of the 50S ribosomal subunit.

Its function is as follows. This protein binds to the 23S rRNA, and is important in its secondary structure. It is located near the subunit interface in the base of the L7/L12 stalk, and near the tRNA binding site of the peptidyltransferase center. The sequence is that of Large ribosomal subunit protein uL6 from Karelsulcia muelleri (strain GWSS) (Sulcia muelleri).